Here is a 692-residue protein sequence, read N- to C-terminus: Elongation factor G (692 aa).

The tr-type G domain occupies 8-283 (NRIRNIGIAA…AVIDYLPAPT (276 aa)). GTP-binding positions include 17–24 (AHIDAGKT), 81–85 (DTPGH), and 135–138 (NKMD).

This sequence belongs to the TRAFAC class translation factor GTPase superfamily. Classic translation factor GTPase family. EF-G/EF-2 subfamily.

The protein resides in the cytoplasm. Its function is as follows. Catalyzes the GTP-dependent ribosomal translocation step during translation elongation. During this step, the ribosome changes from the pre-translocational (PRE) to the post-translocational (POST) state as the newly formed A-site-bound peptidyl-tRNA and P-site-bound deacylated tRNA move to the P and E sites, respectively. Catalyzes the coordinated movement of the two tRNA molecules, the mRNA and conformational changes in the ribosome. The polypeptide is Elongation factor G (Helicobacter pylori (strain P12)).